Reading from the N-terminus, the 218-residue chain is Ribosomal RNA small subunit methyltransferase G (218 aa).

S-adenosyl-L-methionine-binding positions include G82, L87, 137-138 (VE), and R152.

Belongs to the methyltransferase superfamily. RNA methyltransferase RsmG family.

The protein localises to the cytoplasm. The catalysed reaction is guanosine(527) in 16S rRNA + S-adenosyl-L-methionine = N(7)-methylguanosine(527) in 16S rRNA + S-adenosyl-L-homocysteine. Specifically methylates the N7 position of guanine in position 527 of 16S rRNA. In Herminiimonas arsenicoxydans, this protein is Ribosomal RNA small subunit methyltransferase G.